Consider the following 623-residue polypeptide: Trehalase (623 aa).

It belongs to the glycosyl hydrolase 15 family. In terms of assembly, monomer.

The catalysed reaction is alpha,alpha-trehalose + H2O = alpha-D-glucose + beta-D-glucose. Its pathway is glycan degradation; trehalose degradation; D-glucose from alpha,alpha-trehalose: step 1/1. Inhibited by validamycin A. Catalyzes the hydrolysis of alpha,alpha-trehalose into two molecules of D-glucose. The chain is Trehalase from Thermoplasma volcanium (strain ATCC 51530 / DSM 4299 / JCM 9571 / NBRC 15438 / GSS1).